A 244-amino-acid chain; its full sequence is Orotidine 5'-phosphate decarboxylase (244 aa).

Substrate contacts are provided by residues Asp12, Lys34, 61-70 (DLKLFDIPNT), Thr125, Arg187, Gln196, Gly216, and Arg217. Lys63 (proton donor) is an active-site residue.

It belongs to the OMP decarboxylase family. Type 1 subfamily. As to quaternary structure, homodimer.

It catalyses the reaction orotidine 5'-phosphate + H(+) = UMP + CO2. It functions in the pathway pyrimidine metabolism; UMP biosynthesis via de novo pathway; UMP from orotate: step 2/2. Catalyzes the decarboxylation of orotidine 5'-monophosphate (OMP) to uridine 5'-monophosphate (UMP). The sequence is that of Orotidine 5'-phosphate decarboxylase from Dictyoglomus turgidum (strain DSM 6724 / Z-1310).